Consider the following 189-residue polypeptide: GTP cyclohydrolase 1 (189 aa).

Zn(2+) contacts are provided by cysteine 78, histidine 81, and cysteine 150.

The protein belongs to the GTP cyclohydrolase I family. As to quaternary structure, homomer.

The enzyme catalyses GTP + H2O = 7,8-dihydroneopterin 3'-triphosphate + formate + H(+). Its pathway is cofactor biosynthesis; 7,8-dihydroneopterin triphosphate biosynthesis; 7,8-dihydroneopterin triphosphate from GTP: step 1/1. This Listeria monocytogenes serotype 4a (strain HCC23) protein is GTP cyclohydrolase 1.